The following is a 137-amino-acid chain: Outer membrane protein assembly factor BamE (137 aa).

The N-terminal stretch at 1–18 is a signal peptide; that stretch reads MQVKTLLGATFLALSLAS. The N-palmitoyl cysteine moiety is linked to residue C19. A lipid anchor (S-diacylglycerol cysteine) is attached at C19.

Belongs to the BamE family. As to quaternary structure, part of the Bam complex.

It localises to the cell outer membrane. Functionally, part of the outer membrane protein assembly complex, which is involved in assembly and insertion of beta-barrel proteins into the outer membrane. This is Outer membrane protein assembly factor BamE from Haemophilus influenzae (strain ATCC 51907 / DSM 11121 / KW20 / Rd).